We begin with the raw amino-acid sequence, 362 residues long: Bifunctional chorismate mutase/prephenate dehydratase (362 aa).

Residues 1-92 form the Chorismate mutase domain; it reads MEELKELRKE…ACLSLEKKIK (92 aa). Arg8, Arg25, Lys36, and Glu49 together coordinate substrate. The region spanning 93–267 is the Prephenate dehydratase domain; sequence VAYLGPKATF…NFTRFLVIAK (175 aa). In terms of domain architecture, ACT spans 279-356; it reads SILFGVKDEP…QFLKVLGSYP (78 aa).

It is found in the cytoplasm. The catalysed reaction is chorismate = prephenate. It catalyses the reaction prephenate + H(+) = 3-phenylpyruvate + CO2 + H2O. It functions in the pathway amino-acid biosynthesis; L-phenylalanine biosynthesis; phenylpyruvate from prephenate: step 1/1. Its pathway is metabolic intermediate biosynthesis; prephenate biosynthesis; prephenate from chorismate: step 1/1. In terms of biological role, catalyzes the Claisen rearrangement of chorismate to prephenate and the decarboxylation/dehydration of prephenate to phenylpyruvate. In Aquifex aeolicus (strain VF5), this protein is Bifunctional chorismate mutase/prephenate dehydratase (pheA).